The primary structure comprises 313 residues: Ribosomal RNA small subunit methyltransferase H (313 aa).

S-adenosyl-L-methionine contacts are provided by residues Gly35 to His37, Asp55, Phe79, Asp101, and Gln108.

Belongs to the methyltransferase superfamily. RsmH family.

Its subcellular location is the cytoplasm. The enzyme catalyses cytidine(1402) in 16S rRNA + S-adenosyl-L-methionine = N(4)-methylcytidine(1402) in 16S rRNA + S-adenosyl-L-homocysteine + H(+). Specifically methylates the N4 position of cytidine in position 1402 (C1402) of 16S rRNA. In Shigella sonnei (strain Ss046), this protein is Ribosomal RNA small subunit methyltransferase H.